The following is a 273-amino-acid chain: Large ribosomal subunit protein uL2cy (273 aa).

Disordered stretches follow at residues methionine 1–valine 22 and asparagine 224–lysine 273.

This sequence belongs to the universal ribosomal protein uL2 family. Part of the 50S ribosomal subunit.

Its subcellular location is the plastid. The protein localises to the chloroplast. The polypeptide is Large ribosomal subunit protein uL2cy (rpl2-B) (Chloranthus spicatus (Chulantree)).